Here is an 86-residue protein sequence, read N- to C-terminus: Toxin 3FTx-Dis4 (86 aa).

Positions 1 to 19 are cleaved as a signal peptide; it reads MKTLLLSLVMVGFMYLVSG. 3 disulfide bridges follow: Cys24–Cys45, Cys38–Cys63, and Cys79–Cys84.

This sequence belongs to the three-finger toxin family. Ancestral subfamily. Expressed by the venom gland.

It is found in the secreted. The sequence is that of Toxin 3FTx-Dis4 from Dispholidus typus (Boomslang).